The following is a 286-amino-acid chain: Energy-coupling factor transporter ATP-binding protein EcfA2 (286 aa).

An ABC transporter domain is found at 3-246 (IQFNQVSYIY…KTQLLKWHIE (244 aa)). 40-47 (GQTGSGKS) provides a ligand contact to ATP.

Belongs to the ABC transporter superfamily. Energy-coupling factor EcfA family. As to quaternary structure, forms a stable energy-coupling factor (ECF) transporter complex composed of 2 membrane-embedded substrate-binding proteins (S component), 2 ATP-binding proteins (A component) and 2 transmembrane proteins (T component).

It localises to the cell membrane. Its function is as follows. ATP-binding (A) component of a common energy-coupling factor (ECF) ABC-transporter complex. Unlike classic ABC transporters this ECF transporter provides the energy necessary to transport a number of different substrates. This Staphylococcus epidermidis (strain ATCC 12228 / FDA PCI 1200) protein is Energy-coupling factor transporter ATP-binding protein EcfA2.